Here is a 463-residue protein sequence, read N- to C-terminus: Asparagine--tRNA ligase (463 aa).

This sequence belongs to the class-II aminoacyl-tRNA synthetase family. In terms of assembly, homodimer.

It is found in the cytoplasm. The enzyme catalyses tRNA(Asn) + L-asparagine + ATP = L-asparaginyl-tRNA(Asn) + AMP + diphosphate + H(+). The protein is Asparagine--tRNA ligase of Bacillus thuringiensis subsp. konkukian (strain 97-27).